We begin with the raw amino-acid sequence, 325 residues long: Protein SAR DEFICIENT 4 (325 aa).

The transit peptide at 1 to 42 (MAALPVFIPAESFPSILSHETLINHFRTNLPKHSSTITSPVR) directs the protein to the chloroplast.

The protein belongs to the ornithine cyclodeaminase/mu-crystallin family.

The protein resides in the plastid. It localises to the chloroplast. In terms of biological role, involved in the biosynthesis of pipecolate (Pip), a metabolite that orchestrates defense amplification, positive regulation of salicylic acid (SA) biosynthesis, and priming to guarantee effective local resistance induction and the establishment of systemic acquired resistance (SAR). Converts delta-(1)-piperideine-2-carboxylate (P2C) to Pip. Mediates reduction of P2C and biosynthesis of Pip in systemic tissue and contributes to SAR establishment. Does not possess ornithine cyclodeaminase activity in vitro. In Arabidopsis thaliana (Mouse-ear cress), this protein is Protein SAR DEFICIENT 4.